A 116-amino-acid polypeptide reads, in one-letter code: Large ribosomal subunit protein bL19 (116 aa).

The protein belongs to the bacterial ribosomal protein bL19 family.

Its function is as follows. This protein is located at the 30S-50S ribosomal subunit interface and may play a role in the structure and function of the aminoacyl-tRNA binding site. The polypeptide is Large ribosomal subunit protein bL19 (Roseiflexus castenholzii (strain DSM 13941 / HLO8)).